Here is a 366-residue protein sequence, read N- to C-terminus: Isopropyl malate dehydrogenase htyC (366 aa).

71 to 73 (VGG) serves as a coordination point for NADP(+). Residues R91 and R130 each coordinate substrate. Mg(2+) is bound by residues D221, D246, and D250. 277-282 (GCVHGI) is an NADP(+) binding site.

The protein belongs to the isocitrate and isopropylmalate dehydrogenases family. Homodimer. The cofactor is Mg(2+). Mn(2+) is required as a cofactor.

The enzyme catalyses (2R,3S)-3-isopropylmalate + NAD(+) = 4-methyl-2-oxopentanoate + CO2 + NADH. It participates in antifungal biosynthesis. Functionally, isopropyl malate dehydrogenase; part of the gene cluster that mediates the de novo generation of L-homotyrosine from acetyl-CoA and 4-hydroxyphenyl-pyruvate. L-homotyrosine is a building block of echinocandin B, a fungal lipidated cyclic hexapeptide that acts as an antifungal agent. L-homotyrosine 4-hydroxyphenyl-pyruvate first undergoes an aldol-type condensation by htyA with the C-2 of acetyl-CoA followed by the release of CoA to form 2-(4-hydroxybenzyl)-malate. This is followed by isomerization of 2-(4-hydroxy-benzyl)-malate to 3-(4-hydroxybenzyl)-malate by htyD. Thereafter, 3-(4-hydroxybenzyl)-malate undergoes decarboxylation and oxidation to form 2-oxo-4-(4-hydroxybenzyl)butanoic acid, coupled to reduction of NAD(+) to NADH by htyC. The product then undergoes transamination catalyzed by htyB to form L-homotyrosine. In Aspergillus rugulosus (Emericella rugulosa), this protein is Isopropyl malate dehydrogenase htyC.